The sequence spans 221 residues: Proline-rich protein 20A (221 aa).

2 disordered regions span residues 1-103 and 137-174; these read MEEP…QRQG and SLSE…GPQA. Residues 42–53 show a composition bias toward low complexity; it reads PAQPAQPAKPIA. The span at 63 to 72 shows a compositional bias: pro residues; that stretch reads PARPESPPPA. Basic residues predominate over residues 75-93; sequence GRRRGGSRRPGRGRGRRAG.

The protein belongs to the PRR20 family.

This is Proline-rich protein 20A (PRR20A) from Homo sapiens (Human).